Reading from the N-terminus, the 399-residue chain is Probable 2-isopropylmalate synthase (399 aa).

The Pyruvate carboxyltransferase domain maps to 20–272; the sequence is VRIFDTTLRD…RTGVNTKLLY (253 aa). Positions 29, 210, 212, and 246 each coordinate a divalent metal cation.

Belongs to the alpha-IPM synthase/homocitrate synthase family. Homodimer. The cofactor is a divalent metal cation.

It catalyses the reaction 3-methyl-2-oxobutanoate + acetyl-CoA + H2O = (2S)-2-isopropylmalate + CoA + H(+). It functions in the pathway amino-acid biosynthesis; L-leucine biosynthesis; L-leucine from 3-methyl-2-oxobutanoate: step 1/4. In terms of biological role, catalyzes the condensation of the acetyl group of acetyl-CoA with 3-methyl-2-oxobutanoate (2-oxoisovalerate) to form 3-carboxy-3-hydroxy-4-methylpentanoate (2-isopropylmalate). This chain is Probable 2-isopropylmalate synthase (leuA), found in Ignicoccus hospitalis (strain KIN4/I / DSM 18386 / JCM 14125).